Consider the following 178-residue polypeptide: Nicotinamide-nucleotide adenylyltransferase (178 aa).

Belongs to the archaeal NMN adenylyltransferase family.

The protein resides in the cytoplasm. The enzyme catalyses beta-nicotinamide D-ribonucleotide + ATP + H(+) = diphosphate + NAD(+). It participates in cofactor biosynthesis; NAD(+) biosynthesis; NAD(+) from nicotinamide D-ribonucleotide: step 1/1. The polypeptide is Nicotinamide-nucleotide adenylyltransferase (Thermoplasma volcanium (strain ATCC 51530 / DSM 4299 / JCM 9571 / NBRC 15438 / GSS1)).